Here is a 986-residue protein sequence, read N- to C-terminus: Replication factor C subunit 1 (986 aa).

The interval 1 to 95 (MQRGIDSFFK…ALSKLKRHVD (95 aa)) is disordered. A phosphoserine mark is found at serine 18, serine 28, serine 40, serine 41, serine 48, and serine 58. Phosphothreonine is present on threonine 60. Residues serine 62 and serine 63 each carry the phosphoserine modification. Position 71 is a phosphothreonine (threonine 71). Serine 128, serine 137, serine 149, serine 154, serine 156, serine 164, and serine 194 each carry phosphoserine. A compositionally biased stretch (basic and acidic residues) spans 136 to 147 (ESIKEAAPEKKV). 2 disordered regions span residues 136–203 (ESIK…ERHE) and 317–388 (KQVK…NDVP). Threonine 197 carries the post-translational modification Phosphothreonine. The BRCT domain maps to 232–322 (GSPDCLSGLT…SGIAKQVKEE (91 aa)). 2 stretches are compositionally biased toward basic and acidic residues: residues 317–364 (KQVK…EKHD) and 370–385 (VKEE…DKLN). 487–494 (GPPGIGKT) serves as a coordination point for ATP. Positions 913–986 (SEAAGADDDY…ASKSKAKAKK (74 aa)) are disordered. Positions 917 to 932 (GADDDYLDEGPGEEDG) are enriched in acidic residues. Serine 938 and serine 939 each carry phosphoserine. The short motif at 955–959 (KAKKR) is the Nuclear localization signal element. Positions 962-979 (TSKASGGSKKATSSTASK) are enriched in low complexity.

This sequence belongs to the activator 1 large subunit family. As to quaternary structure, interacts with C-terminus of PCNA.

Its subcellular location is the nucleus. Its function is as follows. The elongation of primed DNA templates by DNA polymerase delta and epsilon requires the action of the accessory proteins proliferating cell nuclear antigen (PCNA) and activator 1. This subunit binds to the primer-template junction. This chain is Replication factor C subunit 1 (Gnf1), found in Drosophila melanogaster (Fruit fly).